Here is an 87-residue protein sequence, read N- to C-terminus: Small ribosomal subunit protein bS20 (87 aa).

Belongs to the bacterial ribosomal protein bS20 family.

Its function is as follows. Binds directly to 16S ribosomal RNA. The protein is Small ribosomal subunit protein bS20 of Alkaliphilus oremlandii (strain OhILAs) (Clostridium oremlandii (strain OhILAs)).